The primary structure comprises 102 residues: Putative septation protein SpoVG 2 (102 aa).

Belongs to the SpoVG family.

Could be involved in septation. In Listeria innocua serovar 6a (strain ATCC BAA-680 / CLIP 11262), this protein is Putative septation protein SpoVG 2.